A 400-amino-acid polypeptide reads, in one-letter code: Imidazolonepropionase (400 aa).

Fe(3+) contacts are provided by His-70 and His-72. Zn(2+)-binding residues include His-70 and His-72. Positions 79, 142, and 175 each coordinate 4-imidazolone-5-propanoate. Tyr-142 is an N-formimidoyl-L-glutamate binding site. Position 239 (His-239) interacts with Fe(3+). His-239 provides a ligand contact to Zn(2+). Gln-242 is a binding site for 4-imidazolone-5-propanoate. Position 314 (Asp-314) interacts with Fe(3+). Residue Asp-314 participates in Zn(2+) binding. Asn-316 and Gly-318 together coordinate N-formimidoyl-L-glutamate. 4-imidazolone-5-propanoate is bound at residue Thr-319.

This sequence belongs to the metallo-dependent hydrolases superfamily. HutI family. It depends on Zn(2+) as a cofactor. The cofactor is Fe(3+).

It is found in the cytoplasm. It catalyses the reaction 4-imidazolone-5-propanoate + H2O = N-formimidoyl-L-glutamate. It functions in the pathway amino-acid degradation; L-histidine degradation into L-glutamate; N-formimidoyl-L-glutamate from L-histidine: step 3/3. Its function is as follows. Catalyzes the hydrolytic cleavage of the carbon-nitrogen bond in imidazolone-5-propanoate to yield N-formimidoyl-L-glutamate. It is the third step in the universal histidine degradation pathway. The chain is Imidazolonepropionase from Methylobacterium sp. (strain 4-46).